Consider the following 255-residue polypeptide: Hydroxyacylglutathione hydrolase (255 aa).

Zn(2+)-binding residues include His-55, His-57, Asp-59, His-60, His-112, Asp-129, and His-167.

The protein belongs to the metallo-beta-lactamase superfamily. Glyoxalase II family. In terms of assembly, monomer. The cofactor is Zn(2+).

The enzyme catalyses an S-(2-hydroxyacyl)glutathione + H2O = a 2-hydroxy carboxylate + glutathione + H(+). Its pathway is secondary metabolite metabolism; methylglyoxal degradation; (R)-lactate from methylglyoxal: step 2/2. Thiolesterase that catalyzes the hydrolysis of S-D-lactoyl-glutathione to form glutathione and D-lactic acid. This is Hydroxyacylglutathione hydrolase from Halorhodospira halophila (strain DSM 244 / SL1) (Ectothiorhodospira halophila (strain DSM 244 / SL1)).